The sequence spans 240 residues: Ribonuclease PH (240 aa).

Phosphate is bound by residues arginine 87 and 125–127; that span reads GTR.

This sequence belongs to the RNase PH family. In terms of assembly, homohexameric ring arranged as a trimer of dimers.

The enzyme catalyses tRNA(n+1) + phosphate = tRNA(n) + a ribonucleoside 5'-diphosphate. Its function is as follows. Phosphorolytic 3'-5' exoribonuclease that plays an important role in tRNA 3'-end maturation. Removes nucleotide residues following the 3'-CCA terminus of tRNAs; can also add nucleotides to the ends of RNA molecules by using nucleoside diphosphates as substrates, but this may not be physiologically important. Probably plays a role in initiation of 16S rRNA degradation (leading to ribosome degradation) during starvation. The sequence is that of Ribonuclease PH from Pseudomonas fluorescens (strain SBW25).